The primary structure comprises 274 residues: Diaminopimelate epimerase (274 aa).

Residues N11, Q44, and N64 each coordinate substrate. C73 (proton donor) is an active-site residue. Substrate contacts are provided by residues 74 to 75, N157, N190, and 208 to 209; these read GN and ER. The Proton acceptor role is filled by C217. A substrate-binding site is contributed by 218–219; that stretch reads GS.

The protein belongs to the diaminopimelate epimerase family. Homodimer.

The protein localises to the cytoplasm. It carries out the reaction (2S,6S)-2,6-diaminopimelate = meso-2,6-diaminopimelate. Its pathway is amino-acid biosynthesis; L-lysine biosynthesis via DAP pathway; DL-2,6-diaminopimelate from LL-2,6-diaminopimelate: step 1/1. Catalyzes the stereoinversion of LL-2,6-diaminopimelate (L,L-DAP) to meso-diaminopimelate (meso-DAP), a precursor of L-lysine and an essential component of the bacterial peptidoglycan. This chain is Diaminopimelate epimerase, found in Escherichia coli O127:H6 (strain E2348/69 / EPEC).